A 337-amino-acid polypeptide reads, in one-letter code: MNAPQAPVLVADIGGTNARFALANPTLTSAPLLNDSMREFAVIEFPSLGEAAQHYLHHIGIHTTKGVFAIAGHVDGDEARITNHPWVITRTRTATMLGFDTLHLINDFVAQAMAISVLGPQDVIQIGSAKWEQFPLSAATRNYGIIGPGTGLGVGGLVIRNGRCYPLETEGGHVSFPPSTPEEIRILEILSQQFGRVSNERLISGPGIVNIHRALSEIDGIDPGPLRPQDITMRAADGDIRATRTINLFCNIFGAITGDLVLIQGAWDGVFLTGGLVPKLLNSIQHSGFRQRFEHKGRFSAIMARIPSLAVIHPHPGLLGAAVYARDTEQVPQEIKA.

11 to 16 is a binding site for ATP; the sequence is ADIGGT.

The protein belongs to the bacterial glucokinase family.

It is found in the cytoplasm. The enzyme catalyses D-glucose + ATP = D-glucose 6-phosphate + ADP + H(+). The chain is Glucokinase from Xylella fastidiosa (strain M12).